The following is a 280-amino-acid chain: Large ribosomal subunit protein uL2 (280 aa).

Disordered regions lie at residues 1-58 and 226-280; these read MAIR…GGGH and MNPV…KHGR. Basic residues-rich tracts occupy residues 37–58 and 268–280; these read LHGH…GGGH and IVRR…KHGR.

Belongs to the universal ribosomal protein uL2 family. As to quaternary structure, part of the 50S ribosomal subunit. Forms a bridge to the 30S subunit in the 70S ribosome.

In terms of biological role, one of the primary rRNA binding proteins. Required for association of the 30S and 50S subunits to form the 70S ribosome, for tRNA binding and peptide bond formation. It has been suggested to have peptidyltransferase activity; this is somewhat controversial. Makes several contacts with the 16S rRNA in the 70S ribosome. This chain is Large ribosomal subunit protein uL2, found in Mycolicibacterium paratuberculosis (strain ATCC BAA-968 / K-10) (Mycobacterium paratuberculosis).